A 538-amino-acid polypeptide reads, in one-letter code: Transmembrane protein 266 (538 aa).

At 1–102 (MALVTSFNMA…VFLLSASLNS (102 aa)) the chain is on the cytoplasmic side. The chain crosses the membrane as a helical span at residues 103–123 (FLVACVILVVILLTLELLIDT). The Extracellular portion of the chain corresponds to 124-130 (KLLQFSN). Residues 131–151 (AFQFAGVIHWISLVILSVFFS) form a helical membrane-spanning segment. The Cytoplasmic segment spans residues 152 to 169 (ETVLRIVVLGIWDYIENK). Residues 170-190 (IEVFDGAVIILSLAPMVASTV) form a helical membrane-spanning segment. At 191 to 199 (ANGPRSPWD) the chain is on the extracellular side. A helical transmembrane segment spans residues 200 to 220 (AISLIIMFRIWRVKRVIDAYV). The Cytoplasmic segment spans residues 221–538 (LPVKLEMEMV…EPKLHTVPEA (318 aa)). Positions 232 to 278 (QQYEKAKAIQDEQLERLTQICQEQGFEIRQLRAHLAQQDLDLAAERE) form a coiled coil. Disordered regions lie at residues 380–435 (NSTC…PLPL) and 453–483 (SSLS…VQTS). Positions 381 to 396 (STCASATSETTSHSTC) are enriched in low complexity. A compositionally biased stretch (polar residues) spans 397–417 (GSVTRAQSASSQTLGSSTDCS). Positions 425–434 (PSKPRSSPLP) are enriched in low complexity.

In terms of assembly, homodimer; disulfide-linked. In brain, present in the granule layer of the cerebellar cortex. Localizes on the post-synaptic side of glutamatergic mossy fibers and granule cells in the cerebellum (at protein level). As to expression, predominantly expressed in granule cells in cerebellum (at protein level).

The protein resides in the cell projection. It localises to the dendrite. Its subcellular location is the perikaryon. The protein localises to the cell membrane. Functionally, voltage-sensor protein present on the post-synaptic side of glutamatergic mossy fibers and granule cells in the cerebellum. Despite the presence of a voltage-sensor segment, does not form a functional ion channel and its precise role remains unclear. Undergoes both rapid and slow structural rearrangements in response to changes in voltage. Contains a zinc-binding site that can regulate the slow conformational transition. The polypeptide is Transmembrane protein 266 (Mus musculus (Mouse)).